The following is a 380-amino-acid chain: Glucose-1-phosphate adenylyltransferase (380 aa).

Alpha-D-glucose 1-phosphate is bound by residues Gly-164, 179–180 (EK), and Ser-190.

Belongs to the bacterial/plant glucose-1-phosphate adenylyltransferase family. In terms of assembly, homotetramer.

The enzyme catalyses alpha-D-glucose 1-phosphate + ATP + H(+) = ADP-alpha-D-glucose + diphosphate. It participates in glycan biosynthesis; glycogen biosynthesis. Involved in the biosynthesis of ADP-glucose, a building block required for the elongation reactions to produce glycogen. Catalyzes the reaction between ATP and alpha-D-glucose 1-phosphate (G1P) to produce pyrophosphate and ADP-Glc. This Streptococcus gordonii (strain Challis / ATCC 35105 / BCRC 15272 / CH1 / DL1 / V288) protein is Glucose-1-phosphate adenylyltransferase.